The chain runs to 467 residues: UDP-N-acetylmuramate--L-alanine ligase (467 aa).

Position 112 to 118 (G112 to T118) interacts with ATP.

Belongs to the MurCDEF family.

Its subcellular location is the cytoplasm. It catalyses the reaction UDP-N-acetyl-alpha-D-muramate + L-alanine + ATP = UDP-N-acetyl-alpha-D-muramoyl-L-alanine + ADP + phosphate + H(+). Its pathway is cell wall biogenesis; peptidoglycan biosynthesis. Functionally, cell wall formation. This Polaromonas sp. (strain JS666 / ATCC BAA-500) protein is UDP-N-acetylmuramate--L-alanine ligase.